The chain runs to 677 residues: Methionine--tRNA ligase (677 aa).

The 'HIGH' region signature appears at 15–25 (PYANGSIHLGH). Zn(2+) contacts are provided by cysteine 146, cysteine 149, cysteine 159, and cysteine 162. The 'KMSKS' region motif lies at 333–337 (KMSKS). Lysine 336 lines the ATP pocket. A tRNA-binding domain is found at 575–677 (DFAKVDLRVA…AGAKPGHQVK (103 aa)).

The protein belongs to the class-I aminoacyl-tRNA synthetase family. MetG type 1 subfamily. As to quaternary structure, homodimer. The cofactor is Zn(2+).

Its subcellular location is the cytoplasm. It carries out the reaction tRNA(Met) + L-methionine + ATP = L-methionyl-tRNA(Met) + AMP + diphosphate. In terms of biological role, is required not only for elongation of protein synthesis but also for the initiation of all mRNA translation through initiator tRNA(fMet) aminoacylation. The polypeptide is Methionine--tRNA ligase (Escherichia coli O157:H7).